We begin with the raw amino-acid sequence, 186 residues long: Elongation factor P (186 aa).

It belongs to the elongation factor P family.

It is found in the cytoplasm. It functions in the pathway protein biosynthesis; polypeptide chain elongation. Involved in peptide bond synthesis. Stimulates efficient translation and peptide-bond synthesis on native or reconstituted 70S ribosomes in vitro. Probably functions indirectly by altering the affinity of the ribosome for aminoacyl-tRNA, thus increasing their reactivity as acceptors for peptidyl transferase. In Prochlorococcus marinus (strain SARG / CCMP1375 / SS120), this protein is Elongation factor P.